The primary structure comprises 187 residues: MALPCSFSVALVLLSCHSLCCLACHLPDTHGLRNWRVLTLLGQMRRLSAGSCDHYTNDFAFPKELFDGQRLQEAQALSVVHVMTQKVFHLFCPDTSSAPWNMTLLEELCSGLSEQLDDLEACPLQEAGLAETPLMHEDSTLRTYFQRISLYLQDRNHSPCAWEMVRAEIGRSFFSSTILQERIRRRK.

The N-terminal stretch at Met-1–Ala-23 is a signal peptide. Intrachain disulfides connect Cys-24/Cys-122 and Cys-52/Cys-160. Asn-101 is a glycosylation site (N-linked (GlcNAc...) asparagine).

It belongs to the alpha/beta interferon family.

It localises to the secreted. Its function is as follows. Produced by macrophages, IFN-alpha have antiviral activities. Interferon stimulates the production of two enzymes: a protein kinase and an oligoadenylate synthetase. This chain is Interferon alpha-1/2, found in Canis lupus familiaris (Dog).